The chain runs to 97 residues: Large ribosomal subunit protein uL23 (97 aa).

This sequence belongs to the universal ribosomal protein uL23 family. As to quaternary structure, part of the 50S ribosomal subunit. Contacts protein L29, and trigger factor when it is bound to the ribosome.

In terms of biological role, one of the early assembly proteins it binds 23S rRNA. One of the proteins that surrounds the polypeptide exit tunnel on the outside of the ribosome. Forms the main docking site for trigger factor binding to the ribosome. This Anaeromyxobacter sp. (strain Fw109-5) protein is Large ribosomal subunit protein uL23.